The chain runs to 225 residues: Cytidylate kinase (225 aa).

11 to 19 (GPAAAGKST) is a binding site for ATP.

Belongs to the cytidylate kinase family. Type 1 subfamily.

It is found in the cytoplasm. The enzyme catalyses CMP + ATP = CDP + ADP. It carries out the reaction dCMP + ATP = dCDP + ADP. This is Cytidylate kinase from Bacillus cytotoxicus (strain DSM 22905 / CIP 110041 / 391-98 / NVH 391-98).